A 187-amino-acid chain; its full sequence is Elongation factor P (187 aa).

Belongs to the elongation factor P family.

The protein localises to the cytoplasm. The protein operates within protein biosynthesis; polypeptide chain elongation. Its function is as follows. Involved in peptide bond synthesis. Stimulates efficient translation and peptide-bond synthesis on native or reconstituted 70S ribosomes in vitro. Probably functions indirectly by altering the affinity of the ribosome for aminoacyl-tRNA, thus increasing their reactivity as acceptors for peptidyl transferase. This is Elongation factor P from Parvibaculum lavamentivorans (strain DS-1 / DSM 13023 / NCIMB 13966).